The primary structure comprises 48 residues: uncharacterized protein (48 aa).

Residues 6–26 (IILLMIVCLVVSVLVVVWIIL) traverse the membrane as a helical segment.

Its subcellular location is the host membrane. This is an uncharacterized protein from Spiroplasma melliferum (SpV4).